The following is a 235-amino-acid chain: Myb family transcription factor PHL12 (235 aa).

The span at 1-12 (MMQSREEIRDDS) shows a compositional bias: basic and acidic residues. Residues 1–20 (MMQSREEIRDDSSSGLVLTT) form a disordered region. In terms of domain architecture, HTH myb-type spans 20 to 80 (TDPKPRLRWT…HLQKFRLGKQ (61 aa)). Residues 51-76 (PKTIMRVMGVKGLTLYHLKSHLQKFR) constitute a DNA-binding region (H-T-H motif). Residues 119-139 (RNMNEMQMEVQRRIEEEVVIE) are coiled coil.

This sequence belongs to the MYB-CC family. In terms of tissue distribution, expressed in phloem and/or cambium.

Its subcellular location is the nucleus. This Arabidopsis thaliana (Mouse-ear cress) protein is Myb family transcription factor PHL12.